The sequence spans 331 residues: UPF0194 membrane protein YbhG (331 aa).

The N-terminal stretch at 1–15 (MKKPVVIGLAVVVLA) is a signal peptide. Residues 107 to 208 (EEIAQAAAAV…LNLQDSTLIA (102 aa)) are a coiled coil.

Belongs to the UPF0194 family.

It localises to the periplasm. The chain is UPF0194 membrane protein YbhG from Escherichia coli O139:H28 (strain E24377A / ETEC).